The sequence spans 198 residues: Inner membrane-spanning protein YciB (198 aa).

Transmembrane regions (helical) follow at residues 36–56 (IYSA…ALFL), 64–84 (GQLL…AFHS), 90–110 (WKAP…HFIG), 135–155 (VAWI…AFTF), and 162–182 (FKVF…GVYL).

It belongs to the YciB family.

It is found in the cell inner membrane. Plays a role in cell envelope biogenesis, maintenance of cell envelope integrity and membrane homeostasis. The chain is Inner membrane-spanning protein YciB from Pseudomonas entomophila (strain L48).